We begin with the raw amino-acid sequence, 843 residues long: Protein P (843 aa).

The terminal protein domain (TP) stretch occupies residues 1 to 177; that stretch reads MPLSYPHFRK…FCGSQYSWEQ (177 aa). The interval 178–346 is spacer; it reads ELQHGSTSLN…YCLSHIINLL (169 aa). 2 disordered regions span residues 228–255 and 284–314; these read KQGQ…RWPA and EANP…SVGS. Residues 239 to 249 show a composition bias toward basic residues; sequence RSGRLRSRVHT. The interval 347 to 690 is polymerase/reverse transcriptase domain (RT); that stretch reads EDWGPCYEHG…YMNLYPVARQ (344 aa). Residues 357-600 enclose the Reverse transcriptase domain; it reads EHHIRTPRTP…YNLHFMGYVI (244 aa). 3 residues coordinate Mg(2+): D429, D551, and D552.

It belongs to the hepadnaviridae P protein family.

It carries out the reaction DNA(n) + a 2'-deoxyribonucleoside 5'-triphosphate = DNA(n+1) + diphosphate. The enzyme catalyses Endonucleolytic cleavage to 5'-phosphomonoester.. Its activity is regulated as follows. Activated by host HSP70 and HSP40 in vitro to be able to bind the epsilon loop of the pgRNA. Because deletion of the RNase H region renders the protein partly chaperone-independent, the chaperones may be needed indirectly to relieve occlusion of the RNA-binding site by this domain. Inhibited by several reverse-transcriptase inhibitors: Lamivudine, Adefovir and Entecavir. Multifunctional enzyme that converts the viral RNA genome into dsDNA in viral cytoplasmic capsids. This enzyme displays a DNA polymerase activity that can copy either DNA or RNA templates, and a ribonuclease H (RNase H) activity that cleaves the RNA strand of RNA-DNA heteroduplexes in a partially processive 3'- to 5'-endonucleasic mode. Neo-synthesized pregenomic RNA (pgRNA) are encapsidated together with the P protein, and reverse-transcribed inside the nucleocapsid. Initiation of reverse-transcription occurs first by binding the epsilon loop on the pgRNA genome, and is initiated by protein priming, thereby the 5'-end of (-)DNA is covalently linked to P protein. Partial (+)DNA is synthesized from the (-)DNA template and generates the relaxed circular DNA (RC-DNA) genome. After budding and infection, the RC-DNA migrates in the nucleus, and is converted into a plasmid-like covalently closed circular DNA (cccDNA). The activity of P protein does not seem to be necessary for cccDNA generation, and is presumably released from (+)DNA by host nuclear DNA repair machinery. The protein is Protein P of Hepatitis B virus genotype F2 subtype adw4q (isolate Senegal/9203) (HBV-F).